Here is a 72-residue protein sequence, read N- to C-terminus: Translation initiation factor IF-1 (72 aa).

The region spanning 1–72 is the S1-like domain; the sequence is MSKDDVIEMQ…SRGRITWRAK (72 aa).

The protein belongs to the IF-1 family. As to quaternary structure, component of the 30S ribosomal translation pre-initiation complex which assembles on the 30S ribosome in the order IF-2 and IF-3, IF-1 and N-formylmethionyl-tRNA(fMet); mRNA recruitment can occur at any time during PIC assembly.

Its subcellular location is the cytoplasm. One of the essential components for the initiation of protein synthesis. Stabilizes the binding of IF-2 and IF-3 on the 30S subunit to which N-formylmethionyl-tRNA(fMet) subsequently binds. Helps modulate mRNA selection, yielding the 30S pre-initiation complex (PIC). Upon addition of the 50S ribosomal subunit IF-1, IF-2 and IF-3 are released leaving the mature 70S translation initiation complex. The polypeptide is Translation initiation factor IF-1 (Clostridium novyi (strain NT)).